A 1060-amino-acid polypeptide reads, in one-letter code: Centrosomal protein of 131 kDa (1060 aa).

Over residues 1-11 the composition is skewed to polar residues; sequence MKGSRTITATP. The disordered stretch occupies residues 1–96; the sequence is MKGSRTITAT…TGSPRPAEPT (96 aa). The tract at residues 1–244 is interaction with PLK4; it reads MKGSRTITAT…SQSARGTTGL (244 aa). Phosphoserine is present on residues S14 and S35. Polar residues-rich tracts occupy residues 32-50 and 73-88; these read RPGSASATRSIFRSMSVAT and LRRSNSTTQVNQSWTG. S47 is subject to Phosphoserine; by MAPKAPK2. A Phosphoserine; by MAPKAPK2 and PLK4 modification is found at S78. A phosphoserine mark is found at S89, S105, S114, S146, and S150. Disordered stretches follow at residues 136 to 155 and 217 to 248; these read LALPASAQSPSTLDSALGPR and EGGEGSDLGKPRKNLSSASQSARGTTGLLRRR. Over residues 217–226 the composition is skewed to basic and acidic residues; that stretch reads EGGEGSDLGK. The IQ domain occupies 263–283; the sequence is NQAAVTIQRWYRCQVQRRRAG. 2 stretches are compositionally biased toward basic and acidic residues: residues 314–327 and 344–363; these read EEAARKKAREEKAR and KASEAEHRRPKDRPETRAPE. Positions 314 to 437 are disordered; sequence EEAARKKARE…VSGSSRGKAR (124 aa). Positions 398 to 408 are enriched in low complexity; it reads ASESSPEQWQS. The span at 409-424 shows a compositional bias: basic and acidic residues; it reads PEDKPQDIHSQGEARQ. T473 carries the post-translational modification Phosphothreonine. A Phosphoserine modification is found at S481.

This sequence belongs to the CEP131 family. As to quaternary structure, self-associates. Associates with the centriolar satellite BBSome protein complex Interacts with BBS4; the interaction limits BBS4 availability for association with the BBSome complex, and hence negatively regulates ciliary localization of the BBSome complex. Interacts with MIB1. Interacts with PCM1; the interaction increases in response to ultraviolet light (UV) radiation. Associates with microtubule; association to microtubule is reduced in response to cellular stress, such as UV stimulation, in a process that requires p38 MAP kinase signaling. Interacts with CEP290, DCTN1, MAP1LC3B, PCNT, PCM1 and CEP152. Interacts with 14-3-3 proteins following UV-induced phosphorylation by MAPKAPK2; this inhibits formation of novel centriolar satellites. Interacts with SDCCAG8. Interacts with CCDC61. Interacts with PLK4. Post-translationally, ubiquitinated. Undergoes monoubiquitination catalyzed by the E3 ubiquitin-protein ligase MIB1 in proliferating cells, preventing cilia formation. Monoubiquitination by MIB1 is inhibited in response to cellular stress, such as ultraviolet light (UV) radiation or heat shock, resulting in ciliogenesis restoration. MAPKAPK2-dependent phosphorylation at Ser-47 and Ser-78 occurs in response to cellular stress such as exposure to ultraviolet irradiation and promotes binding to 14-3-3 proteins which leads to cytoplasmic sequestration of CEP131 and blocks formation of new centriolar satellites. Phosphorylation at Ser-78 mediated by PLK4 is essential for proper organization and integrity of centriolar satellites but is dispensable for its localization to centrioles and its function in ciliogenesis. Localized to the pre-acrosome region of round and elongated spermatids in testis but also present in ovary, brain and adipose tissue.

It localises to the cytoplasm. The protein resides in the cytoskeleton. The protein localises to the microtubule organizing center. Its subcellular location is the centrosome. It is found in the centriolar satellite. It localises to the centriole. The protein resides in the cilium basal body. The protein localises to the cytoplasmic vesicle. Its subcellular location is the secretory vesicle. It is found in the acrosome. Its function is as follows. Component of centriolar satellites contributing to the building of a complex and dynamic network required to regulate cilia/flagellum formation. In proliferating cells, MIB1-mediated ubiquitination induces its sequestration within centriolar satellites, precluding untimely cilia formation initiation. In contrast, during normal and ultraviolet or heat shock cellular stress-induced ciliogenesis, its non-ubiquitinated form is rapidly displaced from centriolar satellites and recruited to centrosome/basal bodies in a microtubule- and p38 MAPK-dependent manner. Also acts as a negative regulator of BBSome ciliary trafficking. Plays a role in sperm flagellar formation; may be involved in the regulation of intraflagellar transport (IFT) and/or intramanchette (IMT) trafficking, which are important for axoneme extension and/or cargo delivery to the nascent sperm tail. Required for optimal cell proliferation and cell cycle progression; may play a role in the regulation of genome stability and centriole duplication in non-ciliogenic cells. Involved in centriole duplication. Required for CEP152, WDR62 and CEP63 centrosomal localization and promotes the centrosomal localization of CDK2. Essential for maintaining proper centriolar satellite integrity. In Mus musculus (Mouse), this protein is Centrosomal protein of 131 kDa (Cep131).